We begin with the raw amino-acid sequence, 116 residues long: Spexin (116 aa).

An N-terminal signal peptide occupies residues 1–26; the sequence is MKGLRSLAATTLALFLVFVFLGNSSC. A propeptide spanning residues 27–35 is cleaved from the precursor; that stretch reads APQRLLERR. Residue Gln-49 is modified to Glutamine amide. 2 consecutive propeptides follow at residues 50-116 and 74-116; these read GRRF…LLNW and PNPQ…LLNW. A compositionally biased stretch (basic and acidic residues) spans 55 to 73; sequence SDQSRRKDLSDRPLPERRS. The interval 55–77 is disordered; it reads SDQSRRKDLSDRPLPERRSPNPQ.

It belongs to the spexin family. In terms of tissue distribution, expressed in the type I glomic cells within the carotid body (at protein level). Expressed predominantly in pancreas, testis, kidney, brain and placenta. Expressed in submucosal layer of esophagus and stomach fundus.

It localises to the secreted. The protein resides in the extracellular space. The protein localises to the cytoplasmic vesicle. Its subcellular location is the secretory vesicle. In terms of biological role, plays a role as a central modulator of cardiovascular and renal function and nociception. Also plays a role in energy metabolism and storage. Inhibits adrenocortical cell proliferation with minor stimulation on corticosteroid release. Functionally, acts as a ligand for galanin receptors GALR2 and GALR3. Intracerebroventricular administration of the peptide induces an increase in arterial blood pressure, a decrease in both heart rate and renal excretion and delayed natriuresis. Intraventricular administration of the peptide induces antinociceptive activity. Also induces contraction of muscarinic-like stomach smooth muscles. Intraperitoneal administration of the peptide induces a reduction in food consumption and body weight. Inhibits long chain fatty acid uptake into adipocytes. Its function is as follows. Intracerebroventricular administration of the peptide induces a decrease in heart rate, but no change in arterial pressure, and an increase in urine flow rate. Intraventricular administration of the peptide induces antinociceptive activity. This Homo sapiens (Human) protein is Spexin (SPX).